Reading from the N-terminus, the 208-residue chain is Ribosomal RNA small subunit methyltransferase G (208 aa).

S-adenosyl-L-methionine is bound by residues Gly-78, Phe-83, Glu-101–Ser-103, Ile-129–Glu-130, and Arg-142.

This sequence belongs to the methyltransferase superfamily. RNA methyltransferase RsmG family.

The protein resides in the cytoplasm. Its function is as follows. Specifically methylates the N7 position of a guanine in 16S rRNA. The protein is Ribosomal RNA small subunit methyltransferase G of Borreliella burgdorferi (strain ATCC 35210 / DSM 4680 / CIP 102532 / B31) (Borrelia burgdorferi).